Reading from the N-terminus, the 89-residue chain is Protein FAM25A (89 aa).

It belongs to the FAM25 family.

This Mus musculus (Mouse) protein is Protein FAM25A.